The following is a 297-amino-acid chain: Homoserine kinase (297 aa).

Residue P82–S92 participates in ATP binding.

Belongs to the GHMP kinase family. Homoserine kinase subfamily.

It is found in the cytoplasm. The catalysed reaction is L-homoserine + ATP = O-phospho-L-homoserine + ADP + H(+). Its pathway is amino-acid biosynthesis; L-threonine biosynthesis; L-threonine from L-aspartate: step 4/5. Functionally, catalyzes the ATP-dependent phosphorylation of L-homoserine to L-homoserine phosphate. The sequence is that of Homoserine kinase from Bacillus thuringiensis subsp. konkukian (strain 97-27).